The following is an 80-amino-acid chain: uncharacterized protein (80 aa).

This sequence to B.cereus similar ORF in glnR 5'region.

This is an uncharacterized protein from Bacillus cereus.